Reading from the N-terminus, the 1437-residue chain is Protein CC2D2B (1437 aa).

This is Protein CC2D2B from Homo sapiens (Human).